The following is a 1010-amino-acid chain: Lysosomal alpha-mannosidase (1010 aa).

The first 22 residues, 1–22, serve as a signal peptide directing secretion; that stretch reads MVIKKLFILIFCLFLIINEING. The propeptide at 23-40 is pro I; sequence KKTKINDIKKSKPKLSST. The Zn(2+) site is built by His51 and Asp53. A glycan (N-linked (GlcNAc...) asparagine) is linked at Asn68. Zn(2+)-binding residues include Asp173 and His420. The active-site Nucleophile is Asp173. N-linked (GlcNAc...) asparagine glycans are attached at residues Asn480, Asn520, Asn528, Asn539, Asn623, Asn760, Asn784, Asn828, Asn954, and Asn963. A propeptide spans 508-595 (pro II); sequence RNEPVRIPIP…GGGKINEKVS (88 aa).

It belongs to the glycosyl hydrolase 38 family. In terms of assembly, tetramer of equimolar amounts of 60 and 58 kDa subunits. Zn(2+) is required as a cofactor. Post-translationally, first cleaved into the mature 58 kDa subunit and an intermediate 82 kDa subunit. The latter is then cleaved to its mature 60 kDa subunit form. These events occur in multiple intracellular compartments. The 60 kDa subunit may form one or more intramolecular disulfide bonds.

It is found in the lysosome. The catalysed reaction is Hydrolysis of terminal, non-reducing alpha-D-mannose residues in alpha-D-mannosides.. The chain is Lysosomal alpha-mannosidase (manA) from Dictyostelium discoideum (Social amoeba).